Here is a 682-residue protein sequence, read N- to C-terminus: Potassium-transporting ATPase ATP-binding subunit (682 aa).

The next 4 helical transmembrane spans lie at 34–54 (PVMF…LAMV), 58–78 (IAGS…TVLF), 219–239 (IALT…TATL), and 254–274 (VLVA…LSAI). Aspartate 307 (4-aspartylphosphate intermediate) is an active-site residue. ATP is bound by residues aspartate 344, glutamate 348, 377 to 384 (FTAQSRMS), and lysine 395. Mg(2+) is bound by residues aspartate 518 and aspartate 522. 3 helical membrane passes run 588–608 (FAII…LNVM), 616–636 (AILS…PLAL), and 662–682 (LVVP…LGLA).

The protein belongs to the cation transport ATPase (P-type) (TC 3.A.3) family. Type IA subfamily. The system is composed of three essential subunits: KdpA, KdpB and KdpC.

The protein localises to the cell inner membrane. The enzyme catalyses K(+)(out) + ATP + H2O = K(+)(in) + ADP + phosphate + H(+). Functionally, part of the high-affinity ATP-driven potassium transport (or Kdp) system, which catalyzes the hydrolysis of ATP coupled with the electrogenic transport of potassium into the cytoplasm. This subunit is responsible for energy coupling to the transport system and for the release of the potassium ions to the cytoplasm. The polypeptide is Potassium-transporting ATPase ATP-binding subunit (Salmonella agona (strain SL483)).